The following is a 631-amino-acid chain: Chaperone protein DnaK (631 aa).

Threonine 197 is subject to Phosphothreonine; by autocatalysis. Residues 598–631 are disordered; sequence MYKKEQGQTGGTEQGGTEQKKSGGDDDVIDAEVE. The span at 622–631 shows a compositional bias: acidic residues; the sequence is DDDVIDAEVE.

Belongs to the heat shock protein 70 family.

Its function is as follows. Acts as a chaperone. This chain is Chaperone protein DnaK, found in Nitratiruptor sp. (strain SB155-2).